Consider the following 336-residue polypeptide: Phospho-N-acetylmuramoyl-pentapeptide-transferase (336 aa).

Transmembrane regions (helical) follow at residues 3 to 23 (LTLIAAIISFMVSAFTMPYFI), 53 to 73 (GGTVFLLVATAVSLLVSLFSI), 78 to 98 (SLALISGILSIVVIYGIIGFL), 118 to 138 (LALQLVGGLMFYFLHVSPSGI), 143 to 163 (VFGYQLPLGIFYLFFVLFWVV), 174 to 194 (GIDGLASISVVISLVTYGVIA), 200 to 220 (FDVLLLIGAMIGALLGFFCFN), 226 to 246 (VFMGDVGSLALGAMLAAISIA), 251 to 271 (WTLLIIGIVYVLETSSVMLQV), and 316 to 336 (AFLWGVGSLASLLVLAILYVF).

The protein belongs to the glycosyltransferase 4 family. MraY subfamily. The cofactor is Mg(2+).

It localises to the cell membrane. It catalyses the reaction UDP-N-acetyl-alpha-D-muramoyl-L-alanyl-gamma-D-glutamyl-L-lysyl-D-alanyl-D-alanine + di-trans,octa-cis-undecaprenyl phosphate = Mur2Ac(oyl-L-Ala-gamma-D-Glu-L-Lys-D-Ala-D-Ala)-di-trans,octa-cis-undecaprenyl diphosphate + UMP. It participates in cell wall biogenesis; peptidoglycan biosynthesis. Functionally, catalyzes the initial step of the lipid cycle reactions in the biosynthesis of the cell wall peptidoglycan: transfers peptidoglycan precursor phospho-MurNAc-pentapeptide from UDP-MurNAc-pentapeptide onto the lipid carrier undecaprenyl phosphate, yielding undecaprenyl-pyrophosphoryl-MurNAc-pentapeptide, known as lipid I. The polypeptide is Phospho-N-acetylmuramoyl-pentapeptide-transferase (Streptococcus pyogenes serotype M1).